The primary structure comprises 326 residues: Tumor necrosis factor soluble receptor (326 aa).

The first 16 residues, methionine 1–glycine 16, serve as a signal peptide directing secretion. TNFR-Cys repeat units lie at residues lysine 27 to serine 62, proline 63 to cysteine 104, aspartate 105 to threonine 147, and lysine 148 to threonine 186. 10 disulfides stabilise this stretch: cysteine 28-cysteine 39, cysteine 40-cysteine 53, cysteine 43-cysteine 61, cysteine 64-cysteine 79, cysteine 82-cysteine 96, cysteine 86-cysteine 104, cysteine 106-cysteine 120, cysteine 123-cysteine 146, cysteine 129-cysteine 149, and cysteine 164-cysteine 185. N-linked (GlcNAc...) asparagine; by host glycosylation occurs at asparagine 66. N-linked (GlcNAc...) asparagine; by host glycosylation is found at asparagine 181, asparagine 205, and asparagine 238.

In terms of biological role, binds to TNF-alpha and beta. Probably prevents TNF to reach cellular target and thereby deampening the potential antiviral effects of the cytokine. The sequence is that of Tumor necrosis factor soluble receptor from Oryctolagus cuniculus (Rabbit).